Consider the following 560-residue polypeptide: Dimethylaniline monooxygenase [N-oxide-forming] 4 (560 aa).

Residues 9–13, Glu-32, and 40–41 each bind FAD; these read GAGVS and LW. NADP(+) contacts are provided by residues 60–61 and 195–198; these read TN and TGGD. A helical membrane pass occupies residues 519–539; sequence APVLIVSLLLIYKSSLFLELV.

This sequence belongs to the FMO family. Requires FAD as cofactor. In terms of tissue distribution, detected in liver and kidney (at protein level).

It is found in the microsome membrane. The protein localises to the endoplasmic reticulum membrane. It carries out the reaction N,N-dimethylaniline + NADPH + O2 + H(+) = N,N-dimethylaniline N-oxide + NADP(+) + H2O. Functionally, this protein is involved in the oxidative metabolism of a variety of xenobiotics such as drugs and pesticides. The polypeptide is Dimethylaniline monooxygenase [N-oxide-forming] 4 (Fmo4) (Rattus norvegicus (Rat)).